The sequence spans 177 residues: Disulfide bond formation protein B (177 aa).

Residues 1 to 14 (MLALLKQFSEKRFV) lie on the Cytoplasmic side of the membrane. A helical transmembrane segment spans residues 15 to 31 (WFLLAFSSLALESTALY). Residues 32-49 (FQYGMGLQPCVLCVYERL) are Periplasmic-facing. Cysteines 41 and 44 form a disulfide. A helical transmembrane segment spans residues 50–65 (AMIGLFVAGTIALLQP). The Cytoplasmic segment spans residues 66–72 (RVFILRL). A helical membrane pass occupies residues 73–90 (IALALGLFSSIKGLLISF). Topologically, residues 91–145 (RHLDLQMNPAPWKQCEFIPNFPETLPFHQWFPFIFNPTGSCNESQWSLFGLTMVQ) are periplasmic. A disulfide bridge links cysteine 105 with cysteine 131. Residues 146–164 (WLVVIFSLYVVILTLLLIA) form a helical membrane-spanning segment. The Cytoplasmic portion of the chain corresponds to 165–177 (QVIKTRKQRRLFN).

It belongs to the DsbB family.

The protein localises to the cell inner membrane. In terms of biological role, required for disulfide bond formation in some periplasmic proteins. Acts by oxidizing the DsbA protein. The polypeptide is Disulfide bond formation protein B (Haemophilus influenzae (strain ATCC 51907 / DSM 11121 / KW20 / Rd)).